We begin with the raw amino-acid sequence, 930 residues long: Progesterone receptor (930 aa).

Basic and acidic residues predominate over residues 1-11; that stretch reads MTELKAKEPRA. 2 disordered regions span residues 1-133 and 148-260; these read MTEL…ASPA and LPED…SGAA. An AF3; mediates transcriptional activation region spans residues 1-165; it reads MTELKAKEPR…PATKGVLAPL (165 aa). The interval 1 to 565 is modulating, Pro-Rich; the sequence is MTELKAKEPR…PQYSFESLPQ (565 aa). A Glycyl lysine isopeptide (Lys-Gly) (interchain with G-Cter in SUMO) cross-link involves residue K7. Position 20 is a phosphoserine (S20). Residues 38 to 49 show a composition bias toward polar residues; the sequence is QGSQTSEASSVV. An LXXL motif 1 motif is present at residues 56 to 60; sequence LDGLL. S82 carries the post-translational modification Phosphoserine. Residues 116–120 carry the LXXL motif 2 motif; the sequence is LDTLL. A Phosphoserine modification is found at S131. The mediates transcriptional transrepression stretch occupies residues 166 to 304; it reads MSRPEDKAGD…LATSVVDFIH (139 aa). A Nuclear localization signal motif is present at residues 184-188; that stretch reads KVLPR. Low complexity predominate over residues 187–204; that stretch reads PRGLSPSRQLLLPSSGSP. Phosphoserine occurs at positions 191 and 212. S293 is modified (phosphoserine; by MAPK1). Residues 334-356 are disordered; the sequence is AASPFVPQRGSPSASSTPVAGGD. S344 bears the Phosphoserine; by MAPK mark. A Glycyl lysine isopeptide (Lys-Gly) (interchain with G-Cter in SUMO); alternate cross-link involves residue K387. A Glycyl lysine isopeptide (Lys-Gly) (interchain with G-Cter in ubiquitin); alternate cross-link involves residue K387. At S399 the chain carries Phosphoserine; by CDK2. The interval 415 to 454 is disordered; that stretch reads DFQLAAPPPPSLPPRVPSSRPGEAAVAASPGSASVSSSSS. Pro residues predominate over residues 420 to 430; the sequence is APPPPSLPPRV. Residues 431 to 454 are compositionally biased toward low complexity; sequence PSSRPGEAAVAASPGSASVSSSSS. An AF1; mediates transcriptional activation region spans residues 457-547; it reads STLECILYKA…VYTPYLNYLR (91 aa). K532 participates in a covalent cross-link: Glycyl lysine isopeptide (Lys-Gly) (interchain with G-Cter in SUMO). The segment at residues 566–640 is a DNA-binding region (nuclear receptor); the sequence is KICLICGDEA…AGMVLGGRKF (75 aa). 2 NR C4-type zinc fingers span residues 568-588 and 604-628; these read CLIC…CGSC and CAGR…LRKC. Phosphoserine is present on S673. Residues 676–910 form the NR LBD domain; the sequence is QEIQLIPPLI…EFPEMMSEVI (235 aa). Residues 684–930 are AF2; mediates transcriptional activation; sequence LINLLMSIEP…MVKPLLFHKK (247 aa). Residue R763 coordinates progesterone.

The protein belongs to the nuclear hormone receptor family. NR3 subfamily. As to quaternary structure, interacts with SMARD1 and UNC45A. Interacts with CUEDC2; the interaction promotes ubiquitination, decreases sumoylation, and represses transcriptional activity. Interacts with PIAS3; the interaction promotes sumoylation of PR in a hormone-dependent manner, inhibits DNA-binding, and alters nuclear export. Interacts with SP1; the interaction requires ligand-induced phosphorylation on Ser-344 by ERK1/2-MAPK. Interacts with PRMT2. Interacts with NCOA2 and NCOA1. Interacts with KLF9. Interacts with GTF2B. Post-translationally, phosphorylated on multiple serine sites. Several of these sites are hormone-dependent. Phosphorylation on Ser-293 is highly hormone-dependent and modulates ubiquitination and sumoylation on Lys-387. Phosphorylation on Ser-102 and Ser-344 also requires induction by hormone. Basal phosphorylation on Ser-82, Ser-191 and Ser-399 is increased in response to progesterone and can be phosphorylated in vitro by the CDK2-A1 complex. Increased levels of phosphorylation on Ser-399 also in the presence of EGF, heregulin, IGF, PMA and FBS. Phosphorylation at this site by CDK2 is ligand-independent, and increases nuclear translocation and transcriptional activity. Phosphorylation at Ser-293, but not at Ser-191, is impaired during the G(2)/M phase of the cell cycle. Phosphorylation on Ser-344 by ERK1/2 MAPK is required for interaction with SP1. Sumoylation is hormone-dependent and represses transcriptional activity. Sumoylation on all three sites is enhanced by PIAS3. Desumoylated by SENP1. Sumoylation on Lys-387, the main site of sumoylation, is repressed by ubiquitination on the same site, and modulated by phosphorylation at Ser-293. In terms of processing, ubiquitination is hormone-dependent and represses sumoylation on the same site. Promoted by MAPK-mediated phosphorylation on Ser-293. Ubiquitinated by UBR5, leading to its degradation: UBR5 specifically recognizes and binds ligand-bound PGR when it is not associated with coactivators (NCOAs). In presence of NCOAs, the UBR5-degron is not accessible, preventing its ubiquitination and degradation. Post-translationally, palmitoylated by ZDHHC7 and ZDHHC21. Palmitoylation is required for plasma membrane targeting and for rapid intracellular signaling via ERK and AKT kinases and cAMP generation.

The protein resides in the nucleus. Its subcellular location is the cytoplasm. Its function is as follows. The steroid hormones and their receptors are involved in the regulation of eukaryotic gene expression and affect cellular proliferation and differentiation in target tissues. Transcriptional activator of several progesteron-dependent promoters in a variety of cell types. Involved in activation of SRC-dependent MAPK signaling on hormone stimulation. The chain is Progesterone receptor (PGR) from Oryctolagus cuniculus (Rabbit).